Consider the following 302-residue polypeptide: Ribosomal RNA small subunit methyltransferase A (302 aa).

Positions 15, 17, 42, 64, 89, and 109 each coordinate S-adenosyl-L-methionine. The disordered stretch occupies residues 275-302 (DAASADGHDHGDGSGQGESSPGGARDQI).

This sequence belongs to the class I-like SAM-binding methyltransferase superfamily. rRNA adenine N(6)-methyltransferase family. RsmA subfamily.

It is found in the cytoplasm. The enzyme catalyses adenosine(1518)/adenosine(1519) in 16S rRNA + 4 S-adenosyl-L-methionine = N(6)-dimethyladenosine(1518)/N(6)-dimethyladenosine(1519) in 16S rRNA + 4 S-adenosyl-L-homocysteine + 4 H(+). Specifically dimethylates two adjacent adenosines (A1518 and A1519) in the loop of a conserved hairpin near the 3'-end of 16S rRNA in the 30S particle. May play a critical role in biogenesis of 30S subunits. The protein is Ribosomal RNA small subunit methyltransferase A of Parasynechococcus marenigrum (strain WH8102).